The following is a 183-amino-acid chain: MAAAMMNKTVVVGKESVKGGVAPKVAMSRGGFLNSGIMKKDRDMMVWQPFNNKMFETFSYLPPLTDEQISKQVDYILANSWTPCLEFAASDQAYAGNENCIRMGPVASTYQDNRYWTMWKLPMFGCTDGSQVLSDMQACTKAFPDAYIRLVCFDANRQVQICGFLVHRPPSATDYRLPADRQV.

The N-terminal 43 residues, 1 to 43, are a transit peptide targeting the chloroplast; it reads MAAAMMNKTVVVGKESVKGGVAPKVAMSRGGFLNSGIMKKDRD.

Belongs to the RuBisCO small chain family. As to quaternary structure, heterohexadecamer of 8 large and 8 small subunits.

Its subcellular location is the plastid. It is found in the chloroplast. In terms of biological role, ruBisCO catalyzes two reactions: the carboxylation of D-ribulose 1,5-bisphosphate, the primary event in carbon dioxide fixation, as well as the oxidative fragmentation of the pentose substrate. Both reactions occur simultaneously and in competition at the same active site. Although the small subunit is not catalytic it is essential for maximal activity. The polypeptide is Ribulose bisphosphate carboxylase small subunit, chloroplastic 7 (Acetabularia peniculus (Green alga)).